Here is a 130-residue protein sequence, read N- to C-terminus: Small ribosomal subunit protein uS8x (130 aa).

This sequence belongs to the universal ribosomal protein uS8 family.

The polypeptide is Small ribosomal subunit protein uS8x (RPS15AD) (Arabidopsis thaliana (Mouse-ear cress)).